Consider the following 732-residue polypeptide: Exonuclease 1 (732 aa).

The N-domain stretch occupies residues 1-99; the sequence is MGITGLIPFV…KRRRDSRKQS (99 aa). Mg(2+) is bound by residues Asp30, Asp78, Glu150, Asp152, Asp171, Asp173, and Asp226. The I-domain stretch occupies residues 138–230; the sequence is RSRNVDCIVA…ILSGCDYLDS (93 aa). 3 disordered regions span residues 422 to 471, 524 to 625, and 661 to 716; these read YSFK…QRSP, DEQT…TNST, and SCSS…VSQN. A phosphoserine mark is found at Ser431 and Ser433. The segment covering 432–442 has biased composition (basic and acidic residues); the sequence is PSREDSVDQER. Thr443 carries the phosphothreonine modification. Phosphoserine is present on Ser447. Basic and acidic residues-rich tracts occupy residues 457-467 and 525-537; these read FAKERTGEEAN and EQTRLQREHLRDT. Polar residues-rich tracts occupy residues 572–593 and 608–625; these read RCSSQISDGETDTDTTASSLLE and DLNNSQPQIPTEGNTNST. The span at 661–677 shows a compositional bias: low complexity; it reads SCSSDQRASSTSSSSQQ. The segment covering 703–716 has biased composition (polar residues); the sequence is KSRTNGKLGAVSQN.

The protein belongs to the XPG/RAD2 endonuclease family. EXO1 subfamily. The cofactor is Mg(2+). As to expression, specifically expressed in the female germline.

The protein resides in the nucleus. 5'-&gt;3' double-stranded DNA exonuclease which may also contain a cryptic 3'-&gt;5' double-stranded DNA exonuclease activity. Also exhibits endonuclease activity against 5'-overhanging flap structures similar to those generated by displacement synthesis when DNA polymerase encounters the 5'-end of a downstream Okazaki fragment. Required for DNA mismatch repair (MMR). This Drosophila melanogaster (Fruit fly) protein is Exonuclease 1 (tos).